Reading from the N-terminus, the 753-residue chain is Nibrin (753 aa).

The FHA domain occupies 22 to 81 (YVVGRKNCAFLIQDDQSISRSHAVLTVSRPETTHSQSVSVPVLTIKDTSKYGTFVNGSKL). 2 consecutive BRCT domains span residues 101-191 (SKFR…PTPE) and 221-311 (GKTF…LAVI). The residue at position 274 (Ser274) is a Phosphoserine. Ser343 carries the post-translational modification Phosphoserine; by ATM. Residues 442 to 606 (RECTPRQQSN…NTKQREENEM (165 aa)) form a disordered region. Polar residues predominate over residues 446–455 (PRQQSNSITN). The Nuclear localization signal motif lies at 461 to 467 (RKRERAE). Polar residues predominate over residues 490–500 (CTESSASSAWN). A compositionally biased stretch (basic and acidic residues) spans 517-528 (ESGELASDKTDI). The segment covering 568 to 577 (QTANGDQEAQ) has biased composition (polar residues). The span at 585–606 (CLETKGSRTEEGNTKQREENEM) shows a compositional bias: basic and acidic residues. The FxF/Y motif motif lies at 739–748 (ADDLFRYDPN).

This sequence belongs to the Nibrin family. Component of the MRN complex composed of two heterodimers RAD50 and mre11 associated with a single NBN.

The protein localises to the nucleus. Its subcellular location is the chromosome. It localises to the PML body. The protein resides in the telomere. Component of the MRN complex, which plays a central role in double-strand break (DSB) repair, DNA recombination, maintenance of telomere integrity and meiosis. The MRN complex is involved in the repair of DNA double-strand breaks (DSBs) via homologous recombination (HR), an error-free mechanism which primarily occurs during S and G2 phases. The complex (1) mediates the end resection of damaged DNA, which generates proper single-stranded DNA, a key initial steps in HR, and is (2) required for the recruitment of other repair factors and efficient activation of ATM and ATR upon DNA damage. The MRN complex possesses single-strand endonuclease activity and double-strand-specific 3'-5' exonuclease activity, which are provided by MRE11, to initiate end resection, which is required for single-strand invasion and recombination. Within the MRN complex, NBN acts as a protein-protein adapter, which specifically recognizes and binds phosphorylated proteins, promoting their recruitment to DNA damage sites. Recruits MRE11 and RAD50 components of the MRN complex to DSBs in response to DNA damage. Promotes the recruitment of PI3/PI4-kinase family members ATM, ATR, and probably DNA-PKcs to the DNA damage sites, activating their functions. Mediates the recruitment of phosphorylated RBBP8/CtIP to DSBs, leading to cooperation between the MRN complex and RBBP8/CtIP to initiate end resection. The MRN complex and rbbp8/CtIP are also required for chromosome alignment during metaphase. This chain is Nibrin (NBN), found in Gallus gallus (Chicken).